The primary structure comprises 306 residues: BRCA2 and CDKN1A-interacting protein (306 aa).

A compositionally biased stretch (basic residues) spans 1-10; sequence MASRPKRRAV. The interval 1–45 is disordered; it reads MASRPKRRAVSRVPPALGDEEEEDEVEEQDEDDSDEEEDEEDEVV. Positions 18 to 45 are enriched in acidic residues; the sequence is GDEEEEDEVEEQDEDDSDEEEDEEDEVV. Residues serine 34 and serine 104 each carry the phosphoserine modification. Residues 51–159 form an interaction with BRCA2 region; the sequence is IEFEAYSISD…EKSMVEQLDR (109 aa). The tract at residues 153 to 251 is interaction with CDKN1A; the sequence is MVEQLDRLFN…NAEEEFFYEK (99 aa). Position 273 is a phosphoserine (serine 273).

It belongs to the BCP1 family. As to quaternary structure, interacts with BRCA2, CDKN1A and MTDH/LYRIC. Interacts with DCTN1/p150-glued and ACTR1A/ARP1. Interacts with alpha-, beta- and gamma-tubulins. Interacts with TENT5C; the interaction has no effect on TENT5C poly(A) polymerase function.

The protein resides in the nucleus. It is found in the cytoplasm. Its subcellular location is the cytoskeleton. The protein localises to the microtubule organizing center. It localises to the centrosome. The protein resides in the centriole. It is found in the spindle pole. In terms of biological role, during interphase, required for microtubule organizing and anchoring activities. During mitosis, required for the organization and stabilization of the spindle pole. May promote cell cycle arrest by enhancing the inhibition of CDK2 activity by CDKN1A. May be required for repair of DNA damage by homologous recombination in conjunction with BRCA2. May not be involved in non-homologous end joining (NHEJ). This Bos taurus (Bovine) protein is BRCA2 and CDKN1A-interacting protein (BCCIP).